The chain runs to 62 residues: Large ribosomal subunit protein bL28 (62 aa).

This sequence belongs to the bacterial ribosomal protein bL28 family.

The protein is Large ribosomal subunit protein bL28 of Acholeplasma laidlawii (strain PG-8A).